A 501-amino-acid chain; its full sequence is Lysine--tRNA ligase (501 aa).

Residues glutamate 411 and glutamate 418 each coordinate Mg(2+).

The protein belongs to the class-II aminoacyl-tRNA synthetase family. In terms of assembly, homodimer. Mg(2+) is required as a cofactor.

Its subcellular location is the cytoplasm. The enzyme catalyses tRNA(Lys) + L-lysine + ATP = L-lysyl-tRNA(Lys) + AMP + diphosphate. This Aliivibrio salmonicida (strain LFI1238) (Vibrio salmonicida (strain LFI1238)) protein is Lysine--tRNA ligase.